The sequence spans 95 residues: Aspartyl/glutamyl-tRNA(Asn/Gln) amidotransferase subunit C (95 aa).

This sequence belongs to the GatC family. Heterotrimer of A, B and C subunits.

It catalyses the reaction L-glutamyl-tRNA(Gln) + L-glutamine + ATP + H2O = L-glutaminyl-tRNA(Gln) + L-glutamate + ADP + phosphate + H(+). The catalysed reaction is L-aspartyl-tRNA(Asn) + L-glutamine + ATP + H2O = L-asparaginyl-tRNA(Asn) + L-glutamate + ADP + phosphate + 2 H(+). In terms of biological role, allows the formation of correctly charged Asn-tRNA(Asn) or Gln-tRNA(Gln) through the transamidation of misacylated Asp-tRNA(Asn) or Glu-tRNA(Gln) in organisms which lack either or both of asparaginyl-tRNA or glutaminyl-tRNA synthetases. The reaction takes place in the presence of glutamine and ATP through an activated phospho-Asp-tRNA(Asn) or phospho-Glu-tRNA(Gln). The polypeptide is Aspartyl/glutamyl-tRNA(Asn/Gln) amidotransferase subunit C (Cytophaga hutchinsonii (strain ATCC 33406 / DSM 1761 / CIP 103989 / NBRC 15051 / NCIMB 9469 / D465)).